A 341-amino-acid polypeptide reads, in one-letter code: MKALSKLKAEEGIWMTDVPQPELGHNDIMIKIRKTAICGTDVHIYNWDEWSQKTIPVPMVVGHEYVGEVVAIGQEVKGFTVGDRVSGEGHITCGHCRNCRGGRTHLCRNTTGVGVNRPGSFAEYLVIPAFNAFKIPDNISDELASIFDPFGNAVHTALSFDLVGEDVLVSGAGPIGIMAAAVCKHVGARHVVITDVNEYRLDLARKMGVTRAVNVSKENLNDVMAELGMTEGFDVGLEMSGAPPAFRTLLNAMNHGGRIAMLGIPPSDMSIDWNQVIFKGLFIKGIYGREMFETWYKMAALIQSGLDLTPIITHRFTIDQFQQGFDAMRSGQSGKVVLSWD.

C38 serves as a coordination point for Zn(2+). Active-site charge relay system residues include T40 and H43. The Zn(2+) site is built by H63, E64, C93, C96, C99, and C107. Residues I175, D195, R200, 262 to 264 (LGI), and 286 to 287 (IY) each bind NAD(+).

Belongs to the zinc-containing alcohol dehydrogenase family. Homotetramer. The cofactor is Zn(2+).

It localises to the cytoplasm. The enzyme catalyses L-threonine + NAD(+) = (2S)-2-amino-3-oxobutanoate + NADH + H(+). The protein operates within amino-acid degradation; L-threonine degradation via oxydo-reductase pathway; glycine from L-threonine: step 1/2. Its function is as follows. Catalyzes the NAD(+)-dependent oxidation of L-threonine to 2-amino-3-ketobutyrate. The chain is L-threonine 3-dehydrogenase from Serratia proteamaculans (strain 568).